A 452-amino-acid chain; its full sequence is Ribosomal protein uS12 methylthiotransferase RimO (452 aa).

The region spanning 3–122 (LTVGLISLGC…LPEIITQVMD (120 aa)) is the MTTase N-terminal domain. Positions 12, 48, 85, 162, 166, and 169 each coordinate [4Fe-4S] cluster. Residues 148–392 (LTPPHTAYIK…TLLLARLASE (245 aa)) form the Radical SAM core domain. The 58-residue stretch at 395–452 (QEQIGRQIRVLVDAPGVARTEWDAPDIDGTVSVPLTLPVGQFATVTVTDAVAYELTAE) folds into the TRAM domain.

This sequence belongs to the methylthiotransferase family. RimO subfamily. It depends on [4Fe-4S] cluster as a cofactor.

It is found in the cytoplasm. It carries out the reaction L-aspartate(89)-[ribosomal protein uS12]-hydrogen + (sulfur carrier)-SH + AH2 + 2 S-adenosyl-L-methionine = 3-methylsulfanyl-L-aspartate(89)-[ribosomal protein uS12]-hydrogen + (sulfur carrier)-H + 5'-deoxyadenosine + L-methionine + A + S-adenosyl-L-homocysteine + 2 H(+). Its function is as follows. Catalyzes the methylthiolation of an aspartic acid residue of ribosomal protein uS12. This chain is Ribosomal protein uS12 methylthiotransferase RimO, found in Akkermansia muciniphila (strain ATCC BAA-835 / DSM 22959 / JCM 33894 / BCRC 81048 / CCUG 64013 / CIP 107961 / Muc).